A 198-amino-acid chain; its full sequence is Na(+)-translocating NADH-quinone reductase subunit E (198 aa).

The next 6 helical transmembrane spans lie at 11-31, 35-55, 77-97, 110-130, 140-160, and 176-196; these read SVFIENMALSFFLGMCTFLAV, VSTAFGLGIAVIVVLGISVPV, FLNFITFIGVIAALVQILEMF, GIFLPLITVNCAIFGGVSFMV, VVYGIGAGTGWMLAIVALAGL, and LGITFITVGLMALGFMSFSGI.

The protein belongs to the NqrDE/RnfAE family. In terms of assembly, composed of six subunits; NqrA, NqrB, NqrC, NqrD, NqrE and NqrF.

The protein resides in the cell inner membrane. The catalysed reaction is a ubiquinone + n Na(+)(in) + NADH + H(+) = a ubiquinol + n Na(+)(out) + NAD(+). In terms of biological role, NQR complex catalyzes the reduction of ubiquinone-1 to ubiquinol by two successive reactions, coupled with the transport of Na(+) ions from the cytoplasm to the periplasm. NqrA to NqrE are probably involved in the second step, the conversion of ubisemiquinone to ubiquinol. The chain is Na(+)-translocating NADH-quinone reductase subunit E from Mannheimia succiniciproducens (strain KCTC 0769BP / MBEL55E).